The primary structure comprises 547 residues: Puff-specific protein Bx42 (547 aa).

The tract at residues 177–343 is SNW; sequence AQYIRYTPSQ…AREERAGLRN (167 aa). Serine 227 and serine 235 each carry phosphoserine. Disordered regions lie at residues 333–398 and 486–547; these read RARE…ERDI and QFSG…SKRD. Basic and acidic residues-rich tracts occupy residues 358–398 and 526–539; these read EVRE…ERDI and KRAE…SSHS.

This sequence belongs to the SNW family.

Its subcellular location is the nucleus. In terms of biological role, may play a role in chromatin structure and function. The chain is Puff-specific protein Bx42 (Bx42) from Drosophila melanogaster (Fruit fly).